The following is an 89-amino-acid chain: Large ribosomal subunit protein bL27 (89 aa).

The interval 1–21 is disordered; it reads MAHKKAGGSSRNGRDTEGRRL.

It belongs to the bacterial ribosomal protein bL27 family.

In Granulibacter bethesdensis (strain ATCC BAA-1260 / CGDNIH1), this protein is Large ribosomal subunit protein bL27.